Reading from the N-terminus, the 180-residue chain is Large ribosomal subunit protein uL5 (180 aa).

The protein belongs to the universal ribosomal protein uL5 family. Part of the 50S ribosomal subunit; part of the 5S rRNA/L5/L18/L25 subcomplex. Contacts the 5S rRNA and the P site tRNA. Forms a bridge to the 30S subunit in the 70S ribosome.

In terms of biological role, this is one of the proteins that bind and probably mediate the attachment of the 5S RNA into the large ribosomal subunit, where it forms part of the central protuberance. In the 70S ribosome it contacts protein S13 of the 30S subunit (bridge B1b), connecting the 2 subunits; this bridge is implicated in subunit movement. Contacts the P site tRNA; the 5S rRNA and some of its associated proteins might help stabilize positioning of ribosome-bound tRNAs. The sequence is that of Large ribosomal subunit protein uL5 from Streptococcus suis (strain 05ZYH33).